The primary structure comprises 388 residues: Serine/threonine-protein phosphatase sitA (388 aa).

Residues aspartate 67 and histidine 69 each contribute to the Mn(2+) site. Residues 86–146 form a disordered region; the sequence is PDGSEAEAPK…SQRDRSSSSG (61 aa). Mn(2+)-binding residues include aspartate 161 and asparagine 193. Histidine 194 serves as the catalytic Proton donor. Mn(2+)-binding residues include histidine 243 and histidine 317.

It belongs to the PPP phosphatase family. PP-6 (PP-V) subfamily. The cofactor is Mn(2+).

The catalysed reaction is O-phospho-L-threonyl-[protein] + H2O = L-threonyl-[protein] + phosphate. Functionally, protein phosphatase that acts as a modulator of pkcA/mpkA activity involved in the cell wall integrity pathway. Plays an important role in regulation of adhesion, cell wall integrity, biofilm formation, and virulence. This is Serine/threonine-protein phosphatase sitA from Aspergillus fumigatus (strain ATCC MYA-4609 / CBS 101355 / FGSC A1100 / Af293) (Neosartorya fumigata).